Here is an 84-residue protein sequence, read N- to C-terminus: Serine palmitoyltransferase-regulating protein TSC3 (84 aa).

A helical membrane pass occupies residues 63–83; sequence LHTIFLVVVSLSLFGLLKYIF.

Its subcellular location is the endoplasmic reticulum membrane. Functionally, stimulates the activity of serine palmitoyltransferase (SPT), and thus plays a role in the biosynthesis of sphingolipids. This is Serine palmitoyltransferase-regulating protein TSC3 (TSC3) from Kluyveromyces lactis (strain ATCC 8585 / CBS 2359 / DSM 70799 / NBRC 1267 / NRRL Y-1140 / WM37) (Yeast).